The sequence spans 186 residues: Quinone reductase (186 aa).

Residues 13-20 (SLRKESYN), 80-83 (EYNR), and S116 each bind FMN.

The protein belongs to the SsuE family. In terms of assembly, homotetramer. Dimer of dimers. The tetrameric configuration has a central role in chromate reductase activity. FMN is required as a cofactor.

It catalyses the reaction a quinone + NADH + H(+) = a quinol + NAD(+). The catalysed reaction is a quinone + NADPH + H(+) = a quinol + NADP(+). It carries out the reaction Cr(6+) + 2 NADH + O2 = Cr(3+) + superoxide + 2 NAD(+) + 2 H(+). The enzyme catalyses Cr(6+) + 2 NADPH + O2 = Cr(3+) + superoxide + 2 NADP(+) + 2 H(+). With respect to regulation, may be inhibited by divalent cations. Catalyzes the reduction of quinones. Acts by simultaneous two-electron transfer, avoiding formation of highly reactive semiquinone intermediates and producing quinols that promote tolerance of H(2)O(2). Quinone reduction is probably the primary biological role of ChrR. Can also reduce toxic chromate to insoluble and less toxic Cr(3+). Catalyzes the transfer of three electrons to Cr(6+) producing Cr(3+) and one electron to molecular oxygen. This reaction produces transiently a minimal amount of the toxic Cr(5+) species and reactive oxygen species (ROS). Chromate reduction protects the cell against chromate toxicity, but is likely a secondary activity. Can also reduce potassium ferricyanide and 2,6-dichloroindophenol. During chromate reduction, displays an eightfold preference for NADH over NADPH. This chain is Quinone reductase, found in Pseudomonas putida (strain ATCC 47054 / DSM 6125 / CFBP 8728 / NCIMB 11950 / KT2440).